The following is a 651-amino-acid chain: Carboxypeptidase S1 homolog A (651 aa).

The first 19 residues, 1-19, serve as a signal peptide directing secretion; it reads MHLATGLAVALPFIGAASA. A disulfide bridge links C50 with C121. N-linked (GlcNAc...) asparagine glycosylation is found at N77, N125, N128, N161, N184, and N202. S238 is a catalytic residue. N260, N299, N308, N347, and N410 each carry an N-linked (GlcNAc...) asparagine glycan. Cystine bridges form between C325–C361 and C332–C354. D458 is a catalytic residue. C461 lines the substrate pocket. N-linked (GlcNAc...) asparagine glycans are attached at residues N474 and N504. The active site involves H515. E516 contacts substrate. The tract at residues 604 to 630 is disordered; that stretch reads KSPAGKKQGPPPTSTSPPSPTSSSEGS. The span at 612 to 623 shows a compositional bias: pro residues; that stretch reads GPPPTSTSPPSP. S625 is lipidated: GPI-anchor amidated serine. A propeptide spans 626–651 (removed in mature form); that stretch reads SSEGSVKEFSVSVLGVSVLAAITFFL.

It belongs to the peptidase S10 family.

It is found in the cell membrane. It carries out the reaction Preferential release of a C-terminal arginine or lysine residue.. Functionally, extracellular serine carboxypeptidase that contributes to pathogenicity. The chain is Carboxypeptidase S1 homolog A (SCPA) from Arthroderma otae (strain ATCC MYA-4605 / CBS 113480) (Microsporum canis).